The chain runs to 231 residues: UPF0749 protein YlxW (231 aa).

Positions 1–34 (MRGKSAVLLSLIMLIAGFLISFSFQMTKENNKSA) are cleaved as a signal peptide. A coiled-coil region spans residues 44–94 (YALRDELLKQEKENKKFEKELYQKQNKVRQAENKLKKEKSEYYNVLEDTEK).

It belongs to the UPF0749 family.

Its function is as follows. May be involved in cell division and sporulation. This is UPF0749 protein YlxW (ylxW) from Bacillus subtilis (strain 168).